A 93-amino-acid chain; its full sequence is MAGIHVVLGLFEGALFTNVNAFLVLMIILSGLIGLFSGYASIGAFGSFVSFTHIASTVDLWIFNSMLYIIMTIVFVVMSLQAWQFIGSNGVNQ.

3 consecutive transmembrane segments (helical) span residues 1–21, 22–42, and 60–80; these read MAGIHVVLGLFEGALFTNVNA, FLVLMIILSGLIGLFSGYASI, and LWIFNSMLYIIMTIVFVVMSL.

The protein resides in the host membrane. This is Putative transmembrane protein ORF25 from His1 virus (isolate Australia/Victoria) (His1V).